We begin with the raw amino-acid sequence, 192 residues long: Ribosomal RNA large subunit methyltransferase E (192 aa).

S-adenosyl-L-methionine contacts are provided by glycine 48, phenylalanine 50, aspartate 67, aspartate 85, and aspartate 107. The active-site Proton acceptor is lysine 147.

Belongs to the class I-like SAM-binding methyltransferase superfamily. RNA methyltransferase RlmE family.

It localises to the cytoplasm. The enzyme catalyses uridine(2552) in 23S rRNA + S-adenosyl-L-methionine = 2'-O-methyluridine(2552) in 23S rRNA + S-adenosyl-L-homocysteine + H(+). Specifically methylates the uridine in position 2552 of 23S rRNA at the 2'-O position of the ribose in the fully assembled 50S ribosomal subunit. This chain is Ribosomal RNA large subunit methyltransferase E, found in Borrelia garinii subsp. bavariensis (strain ATCC BAA-2496 / DSM 23469 / PBi) (Borreliella bavariensis).